The following is a 208-amino-acid chain: MLKLAIPKGRLEEKVMTYLKKTGFTFERESSILREGKDIVCFMVRPFDVPTYLVHGVADIGFCGTDVLLEKETSLIQPFFIPTNISRMVLAGPKGKGIPEGEKRIATKFPNVTQRYCETRGWHCRIIPLKGSVELAPIAGLADLIVDITETGRTLKENNLEILDEIFVIRTHVVVNPVSYRTKREEVVSFLEKLQEVIEHDFDEQPRR.

Belongs to the ATP phosphoribosyltransferase family. Short subfamily. In terms of assembly, heteromultimer composed of HisG and HisZ subunits.

It localises to the cytoplasm. It catalyses the reaction 1-(5-phospho-beta-D-ribosyl)-ATP + diphosphate = 5-phospho-alpha-D-ribose 1-diphosphate + ATP. It functions in the pathway amino-acid biosynthesis; L-histidine biosynthesis; L-histidine from 5-phospho-alpha-D-ribose 1-diphosphate: step 1/9. Catalyzes the condensation of ATP and 5-phosphoribose 1-diphosphate to form N'-(5'-phosphoribosyl)-ATP (PR-ATP). Has a crucial role in the pathway because the rate of histidine biosynthesis seems to be controlled primarily by regulation of HisG enzymatic activity. This is ATP phosphoribosyltransferase from Thermotoga petrophila (strain ATCC BAA-488 / DSM 13995 / JCM 10881 / RKU-1).